The sequence spans 258 residues: L-aspartate dehydrogenase 1 (258 aa).

2 residues coordinate NAD(+): Ala121 and Asn181. The active site involves His211.

The protein belongs to the L-aspartate dehydrogenase family.

The catalysed reaction is L-aspartate + NADP(+) + H2O = oxaloacetate + NH4(+) + NADPH + H(+). It carries out the reaction L-aspartate + NAD(+) + H2O = oxaloacetate + NH4(+) + NADH + H(+). It participates in cofactor biosynthesis; NAD(+) biosynthesis; iminoaspartate from L-aspartate (dehydrogenase route): step 1/1. Specifically catalyzes the NAD or NADP-dependent dehydrogenation of L-aspartate to iminoaspartate. In Bordetella parapertussis (strain 12822 / ATCC BAA-587 / NCTC 13253), this protein is L-aspartate dehydrogenase 1.